Reading from the N-terminus, the 220-residue chain is MDRMEEPPDVVIRRLPLYARSLRYLLQEGVESVSSQELGDRINVTAAQIRKDLSYFGEFGKQGIGYNVRKLLQQIEDILGLTREWPVAVVGIGHLGEAIARYEGFRQQGIRIAGLFDSNPSKIGTVIDGMTVQSIEEADRIIREQGIRLAIIAVPARSAQEVTDRLVMAGVRAILSYAPTVLQVPDGVWVRYIDPVAILHSMTYYLARDINSARHNSPES.

The H-T-H motif DNA-binding region spans 17–56 (LYARSLRYLLQEGVESVSSQELGDRINVTAAQIRKDLSYF). NAD(+) is bound at residue 91–96 (GIGHLG).

It belongs to the transcriptional regulatory Rex family. As to quaternary structure, homodimer.

It localises to the cytoplasm. Modulates transcription in response to changes in cellular NADH/NAD(+) redox state. This chain is Redox-sensing transcriptional repressor Rex, found in Roseiflexus sp. (strain RS-1).